Here is a 480-residue protein sequence, read N- to C-terminus: GTPase Der (480 aa).

2 consecutive EngA-type G domains span residues 5-170 and 178-351; these read PVVA…PSQE and LKLA…QSSM. GTP contacts are provided by residues 11 to 18, 58 to 62, 123 to 126, 184 to 191, 231 to 235, and 296 to 299; these read GRPNVGKS, DTGGI, NKVD, DTAGV, and NKWD. The region spanning 352-436 is the KH-like domain; it reads FEVSTNRLTQ…PLNVVFKLNE (85 aa). Residues 438-454 show a composition bias toward polar residues; sequence PYANKSDTPTKAKTQQL. Residues 438 to 480 are disordered; that stretch reads PYANKSDTPTKAKTQQLRQRERNRAQKFTTKDKPRFTNKDKKR. A compositionally biased stretch (basic and acidic residues) spans 455 to 480; that stretch reads RQRERNRAQKFTTKDKPRFTNKDKKR.

Belongs to the TRAFAC class TrmE-Era-EngA-EngB-Septin-like GTPase superfamily. EngA (Der) GTPase family. As to quaternary structure, associates with the 50S ribosomal subunit.

Functionally, GTPase that plays an essential role in the late steps of ribosome biogenesis. The sequence is that of GTPase Der from Psychrobacter cryohalolentis (strain ATCC BAA-1226 / DSM 17306 / VKM B-2378 / K5).